The sequence spans 633 residues: Probable potassium transport system protein Kup 2 (633 aa).

11 consecutive transmembrane segments (helical) span residues 59–79 (ISAI…ILIM), 110–130 (ILLV…LTPA), 145–165 (TALQ…LFLF), 173–193 (IGAL…AAGI), 219–239 (GFAS…AEAL), 256–276 (FGLV…LIIV), 287–307 (LLYP…ATVI), 345–365 (IYIP…VLGF), 374–394 (AYGV…FFVI), 402–422 (LLLS…FVSS), and 429–449 (EGGW…LTWV).

It belongs to the HAK/KUP transporter (TC 2.A.72) family.

The protein resides in the cell inner membrane. It catalyses the reaction K(+)(in) + H(+)(in) = K(+)(out) + H(+)(out). Its function is as follows. Transport of potassium into the cell. Likely operates as a K(+):H(+) symporter. This chain is Probable potassium transport system protein Kup 2, found in Cupriavidus necator (strain ATCC 17699 / DSM 428 / KCTC 22496 / NCIMB 10442 / H16 / Stanier 337) (Ralstonia eutropha).